The primary structure comprises 360 residues: Peptide chain release factor 1 (360 aa).

An N5-methylglutamine modification is found at Gln-235. The disordered stretch occupies residues 284–303 (RERQSKEAAERKSLVGSGDR).

This sequence belongs to the prokaryotic/mitochondrial release factor family. Post-translationally, methylated by PrmC. Methylation increases the termination efficiency of RF1.

Its subcellular location is the cytoplasm. In terms of biological role, peptide chain release factor 1 directs the termination of translation in response to the peptide chain termination codons UAG and UAA. The sequence is that of Peptide chain release factor 1 from Bordetella avium (strain 197N).